Here is a 70-residue protein sequence, read N- to C-terminus: Large ribosomal subunit protein bL31 (70 aa).

Residues cysteine 16, cysteine 18, cysteine 37, and cysteine 40 each coordinate Zn(2+).

It belongs to the bacterial ribosomal protein bL31 family. Type A subfamily. In terms of assembly, part of the 50S ribosomal subunit. It depends on Zn(2+) as a cofactor.

In terms of biological role, binds the 23S rRNA. This is Large ribosomal subunit protein bL31 from Glaesserella parasuis serovar 5 (strain SH0165) (Haemophilus parasuis).